We begin with the raw amino-acid sequence, 214 residues long: Clavatol biosynthesis cluster protein B (214 aa).

A signal peptide spans 1-17 (MAALSFQCLCVASAVRA). N-linked (GlcNAc...) asparagine glycans are attached at residues Asn103 and Asn204.

It participates in secondary metabolite biosynthesis. Part of the cla gene cluster that produces clavatol and ortho-quinone methide. The clavatol biosynthesis cluster cla and the terrestric acid cluster tra are both involved in the production of peniphenones and penilactones. The non-reducing PKS claF is responsible for the formation of clavatol from successive condensations of 3 malonyl-CoA units, presumably with a simple acetyl-CoA starter unit, and 2 methylation steps. The esterase claE probably collaborates with claF by catalyzing the hydrolysis of ACP-bound acyl intermediates to free the ACP from stalled intermediates. The clavatol oxidase claD then converts clavatol to hydroxyclavatol. Spontaneous dehydration of hydroxyclavatol leads to the accumulation of the highly active ortho-quinone methide. On the other hand, the PKS-NRPS hybrid traA is involved in the formation of crustosic acid, with the help of traB and traD. The polyketide synthase module (PKS) of traA is responsible for the synthesis of the polyketide backbone via the condensation of an acetyl-CoA starter unit with 3 malonyl-CoA units. The downstream nonribosomal peptide synthetase (NRPS) module then amidates the carboxyl end of the polyketide with L-malic acid. Because traA lacks a designated enoylreductase (ER) domain, the required activity is provided the enoyl reductase traG. Crustosic acid undergoes decarboxylation and isomerization to the terrestric acid, catalyzed by the 2-oxoglutarate-dependent dioxygenase traH. Both acids are further converted to the 2 gamma-butyrolactones (R)-5-methyltetronic acid and (S)-5-carboxylmethyltetronic acid, with involvement of the cytochrome P450 monooxygenase claJ. Spontaneous addition of the methide to these gamma-butyrolactones leads to peniphenone D and penilactone D, which undergo again stereospecific attacking by methide to give penilactones A and B. The function of claB has not been investigated yet. This chain is Clavatol biosynthesis cluster protein B, found in Penicillium crustosum (Blue mold fungus).